Consider the following 778-residue polypeptide: Endonuclease MutS2 (778 aa).

Residue glycine 328–threonine 335 participates in ATP binding. The region spanning leucine 702–lysine 777 is the Smr domain.

This sequence belongs to the DNA mismatch repair MutS family. MutS2 subfamily. Homodimer. Binds to stalled ribosomes, contacting rRNA.

In terms of biological role, endonuclease that is involved in the suppression of homologous recombination and thus may have a key role in the control of bacterial genetic diversity. Functionally, acts as a ribosome collision sensor, splitting the ribosome into its 2 subunits. Detects stalled/collided 70S ribosomes which it binds and splits by an ATP-hydrolysis driven conformational change. Acts upstream of the ribosome quality control system (RQC), a ribosome-associated complex that mediates the extraction of incompletely synthesized nascent chains from stalled ribosomes and their subsequent degradation. Probably generates substrates for RQC. This chain is Endonuclease MutS2, found in Streptococcus pneumoniae (strain Taiwan19F-14).